A 421-amino-acid chain; its full sequence is 3-isopropylmalate dehydratase large subunit (421 aa).

[4Fe-4S] cluster contacts are provided by Cys300, Cys360, and Cys363.

The protein belongs to the aconitase/IPM isomerase family. LeuC type 2 subfamily. In terms of assembly, heterodimer of LeuC and LeuD. [4Fe-4S] cluster is required as a cofactor.

The enzyme catalyses (2R,3S)-3-isopropylmalate = (2S)-2-isopropylmalate. It functions in the pathway amino-acid biosynthesis; L-leucine biosynthesis; L-leucine from 3-methyl-2-oxobutanoate: step 2/4. Functionally, catalyzes the isomerization between 2-isopropylmalate and 3-isopropylmalate, via the formation of 2-isopropylmaleate. The polypeptide is 3-isopropylmalate dehydratase large subunit (Moorella thermoacetica (strain ATCC 39073 / JCM 9320)).